A 400-amino-acid polypeptide reads, in one-letter code: GTPase Obg (400 aa).

Residues 1-159 form the Obg domain; sequence MKFVDEVQIR…RTLKLELLLL (159 aa). One can recognise an OBG-type G domain in the interval 160–333; it reads ADVGMLGLPN…VCYDILDLLD (174 aa). Residues 166-173, 191-195, 213-216, 283-286, and 314-316 contribute to the GTP site; these read GLPNAGKS, FTTLV, DIPG, NKMD, and SAI. 2 residues coordinate Mg(2+): Ser-173 and Thr-193.

It belongs to the TRAFAC class OBG-HflX-like GTPase superfamily. OBG GTPase family. Monomer. It depends on Mg(2+) as a cofactor.

Its subcellular location is the cytoplasm. Its function is as follows. An essential GTPase which binds GTP, GDP and possibly (p)ppGpp with moderate affinity, with high nucleotide exchange rates and a fairly low GTP hydrolysis rate. Plays a role in control of the cell cycle, stress response, ribosome biogenesis and in those bacteria that undergo differentiation, in morphogenesis control. The protein is GTPase Obg of Aeromonas salmonicida (strain A449).